We begin with the raw amino-acid sequence, 203 residues long: Excretory canal abnormal exc-13 (203 aa).

The N-terminal stretch at 1 to 20 (MIGFLKFALIGTVLLGVANG) is a signal peptide. N-linked (GlcNAc...) asparagine glycans are attached at residues asparagine 32, asparagine 84, and asparagine 188.

The protein belongs to the UPF0376 family.

The protein localises to the secreted. The protein is Excretory canal abnormal exc-13 of Caenorhabditis elegans.